An 89-amino-acid polypeptide reads, in one-letter code: Small ribosomal subunit protein uS15 (89 aa).

The protein belongs to the universal ribosomal protein uS15 family. Part of the 30S ribosomal subunit. Forms a bridge to the 50S subunit in the 70S ribosome, contacting the 23S rRNA.

Functionally, one of the primary rRNA binding proteins, it binds directly to 16S rRNA where it helps nucleate assembly of the platform of the 30S subunit by binding and bridging several RNA helices of the 16S rRNA. In terms of biological role, forms an intersubunit bridge (bridge B4) with the 23S rRNA of the 50S subunit in the ribosome. This is Small ribosomal subunit protein uS15 from Acaryochloris marina (strain MBIC 11017).